Here is a 954-residue protein sequence, read N- to C-terminus: Kinesin-like protein KIN-14A (954 aa).

A Calponin-homology (CH) domain is found at 24 to 142; it reads ALRRHQAATW…CVISLKSYHE (119 aa). The stretch at 242–293 forms a coiled coil; sequence LSRQLEKEQSSNSQVENRRRLLQAQESELLELKSMFQEVKIDFRTLKTQFQD. In terms of domain architecture, Kinesin motor spans 332 to 651; the sequence is NIRVFCRIRP…LKFAQRASCV (320 aa). 413–420 provides a ligand contact to ATP; it reads GQTGSGKT. Residues 656–692 adopt a coiled-coil conformation; that stretch reads AHANKESNEIRELKEQVENLKRALAAKELEKSSFKLK. The segment covering 697–709 has biased composition (basic and acidic residues); it reads VRERAKQVPERTP. Disordered stretches follow at residues 697–743, 824–858, and 882–954; these read VRER…TKLN, NLEV…RKSI, and PAKI…KRWL. Polar residues-rich tracts occupy residues 831 to 849 and 886 to 898; these read DEPS…NATK and ANST…SSIT.

This sequence belongs to the TRAFAC class myosin-kinesin ATPase superfamily. Kinesin family. KIN-14 subfamily.

In Oryza sativa subsp. japonica (Rice), this protein is Kinesin-like protein KIN-14A.